A 365-amino-acid polypeptide reads, in one-letter code: Sulfotransferase 2B1 (365 aa).

70–75 is a binding site for 3'-phosphoadenylyl sulfate; sequence KSGTTW. Residues W98, W103, and H125 each coordinate substrate. H125 serves as the catalytic Proton acceptor. Residues R147, S155, Y210, 244–249, and 274–276 each bind 3'-phosphoadenylyl sulfate; these read STFSAM and RKG. A disordered region spans residues 303 to 365; the sequence is GMPTFPWDED…ASETPHPRPS (63 aa). Acidic residues predominate over residues 309–325; the sequence is WDEDPEEDGSPDPEPSP. S348 is subject to Phosphoserine.

It belongs to the sulfotransferase 1 family. In terms of processing, phosphorylated. Expressed in the stratum granulosum-stratum corneum junction in the skin (at protein level). Expressed highly in placenta, prostate and trachea and lower expression in the small intestine and lung.

It localises to the cytoplasm. Its subcellular location is the cytosol. The protein localises to the microsome. It is found in the nucleus. The catalysed reaction is an alcohol + 3'-phosphoadenylyl sulfate = an alkyl sulfate + adenosine 3',5'-bisphosphate + H(+). It catalyses the reaction 3beta-hydroxyandrost-5-en-17-one + 3'-phosphoadenylyl sulfate = dehydroepiandrosterone 3-sulfate + adenosine 3',5'-bisphosphate + H(+). It carries out the reaction (24S)-hydroxycholesterol + 3'-phosphoadenylyl sulfate = (24S)-hydroxycholesterol 3-sulfate + adenosine 3',5'-bisphosphate + H(+). The enzyme catalyses cholesterol + 3'-phosphoadenylyl sulfate = cholesterol sulfate + adenosine 3',5'-bisphosphate + H(+). The catalysed reaction is pregnenolone + 3'-phosphoadenylyl sulfate = pregnenolone sulfate + adenosine 3',5'-bisphosphate + H(+). Functionally, sulfotransferase that utilizes 3'-phospho-5'-adenylyl sulfate (PAPS) as sulfonate donor to catalyze the sulfate conjugation. Responsible for the sulfation of cholesterol. Catalyzes sulfation of the 3beta-hydroxyl groups of steroids, such as, pregnenolone and dehydroepiandrosterone (DHEA). Preferentially sulfonates cholesterol, while it also has significant activity with pregnenolone and DHEA. Plays a role in epidermal cholesterol metabolism and in the regulation of epidermal proliferation and differentiation. Sulfonates pregnenolone but not cholesterol. In Homo sapiens (Human), this protein is Sulfotransferase 2B1 (SULT2B1).